The chain runs to 199 residues: MGSFKDDREEVLQAWYMDDSDEDQRLPHHRDPKEFVSLDQLAKLGVLSWRLDADNYETDEELKKIREARGYSYMDFCEVCPEKLPNYEEKIKNFFEEHLHTDEEIRYCVAGSGYFDVRDQNDSWIRVWLKKGGMIVLPAGIYHRFTLDSNNYIKAMRLFVGDPVWTPFNRPHDNLPARQEYLEAFGQKEAANHVVDAAA.

Residues His-98, His-100, Glu-104, and His-143 each contribute to the Fe(2+) site. Ni(2+) is bound by residues His-98, His-100, Glu-104, and His-143.

This sequence belongs to the acireductone dioxygenase (ARD) family. It depends on Fe(2+) as a cofactor. The cofactor is Ni(2+).

It is found in the cytoplasm. The protein localises to the nucleus. The catalysed reaction is 1,2-dihydroxy-5-(methylsulfanyl)pent-1-en-3-one + O2 = 4-methylsulfanyl-2-oxobutanoate + formate + 2 H(+). It catalyses the reaction 1,2-dihydroxy-5-(methylsulfanyl)pent-1-en-3-one + O2 = 3-(methylsulfanyl)propanoate + CO + formate + 2 H(+). It functions in the pathway amino-acid biosynthesis; L-methionine biosynthesis via salvage pathway; L-methionine from S-methyl-5-thio-alpha-D-ribose 1-phosphate: step 5/6. Catalyzes 2 different reactions between oxygen and the acireductone 1,2-dihydroxy-3-keto-5-methylthiopentene (DHK-MTPene) depending upon the metal bound in the active site. Fe-containing acireductone dioxygenase (Fe-ARD) produces formate and 2-keto-4-methylthiobutyrate (KMTB), the alpha-ketoacid precursor of methionine in the methionine recycle pathway. Ni-containing acireductone dioxygenase (Ni-ARD) produces methylthiopropionate, carbon monoxide and formate, and does not lie on the methionine recycle pathway. The chain is Acireductone dioxygenase 2 from Vitis vinifera (Grape).